The following is a 122-amino-acid chain: Large ribosomal subunit protein uL14 (122 aa).

It belongs to the universal ribosomal protein uL14 family. Part of the 50S ribosomal subunit. Forms a cluster with proteins L3 and L19. In the 70S ribosome, L14 and L19 interact and together make contacts with the 16S rRNA in bridges B5 and B8.

Its function is as follows. Binds to 23S rRNA. Forms part of two intersubunit bridges in the 70S ribosome. The sequence is that of Large ribosomal subunit protein uL14 from Geobacter sulfurreducens (strain ATCC 51573 / DSM 12127 / PCA).